The primary structure comprises 1388 residues: Rho-associated protein kinase 2 (1388 aa).

Residues 1 to 26 (MSRPPPTGKMPGAPEAAPGDGAGAGR) are disordered. Residues 92 to 354 (YDVVKVIGRG…VEEIKQHPFF (263 aa)) enclose the Protein kinase domain. ATP-binding positions include 98–106 (IGRGAFGEV) and Lys-121. Asp-214 acts as the Proton acceptor in catalysis. Residues 357 to 425 (DQWNWDNIRE…FRENLLLSDS (69 aa)) enclose the AGC-kinase C-terminal domain. The interaction with PPP1R12A stretch occupies residues 363-784 (NIRETAAPVV…LNELLKQKDV (422 aa)). Positions 373 to 420 (PELSSDIDSSNFDDIEDDKGDVETFPIPKAFVGNQLPFIGFTYFRENL) are interaction with NPM1. Thr-414 carries the post-translational modification Phosphothreonine; by ROCK2. The stretch at 439–1131 (SEESQEIQKK…QLQALHIGMD (693 aa)) forms a coiled coil. The region spanning 497-573 (TLRQLEREKA…LDEANALLRT (77 aa)) is the REM-1 domain. Over residues 512–530 (NAEYQRKADHEADKKRNLE) the composition is skewed to basic and acidic residues. The interval 512 to 532 (NAEYQRKADHEADKKRNLEND) is disordered. Tyr-722 carries the phosphotyrosine; by SRC modification. One can recognise a RhoBD domain in the interval 979–1047 (TSDVANLANE…LAEIMNRKEP (69 aa)). Residues 979–1047 (TSDVANLANE…LAEIMNRKEP (69 aa)) are RHOA binding. Ser-1137 bears the Phosphoserine mark. Residues 1150 to 1349 (ESRLEGWLSL…WVSRLVKKIP (200 aa)) form the PH domain. Thr-1212 bears the Phosphothreonine mark. A Phorbol-ester/DAG-type zinc finger spans residues 1260–1315 (GHEFIPTLYHFPTNCEACMKPLWHMFKPPPALECRRCHIKCHKDHMDKKEEIIAPC). A disordered region spans residues 1345-1388 (VKKIPKKPPAPDPFARSSPRTSMKIQQNQSIRRPSRQLAPNKPS). Residues Ser-1362 and Ser-1374 each carry the phosphoserine modification. Residues 1362 to 1376 (SPRTSMKIQQNQSIR) are compositionally biased toward polar residues.

Belongs to the protein kinase superfamily. AGC Ser/Thr protein kinase family. As to quaternary structure, homodimer. Interacts with IRS1. Interacts with RAF1. Interacts with RHOA (activated by GTP), RHOB and RHOC. Interacts with PPP1R12A. Interacts with EP300. Interacts with CHORDC1. Interacts with BRCA2. Interacts with NPM1; this interaction enhances ROCK2 activity. Interacts with SORL1. Interacts with PJVK. Mg(2+) is required as a cofactor. Autophosphorylated. Phosphorylation at Tyr-722 reduces its binding to RHOA and is crucial for focal adhesion dynamics. Dephosphorylation by PTPN11 stimulates its RHOA binding activity. Post-translationally, cleaved by granzyme B during apoptosis. This leads to constitutive activation of the kinase and membrane blebbing. Highly expressed in brain, heart, lung, liver, stomach, spleen, kidney, testis, muscle, embryo and placenta. Isoform 2 is expressed predominantly in the skeletal muscle.

It localises to the cytoplasm. Its subcellular location is the cell membrane. The protein resides in the nucleus. The protein localises to the cytoskeleton. It is found in the microtubule organizing center. It localises to the centrosome. It catalyses the reaction L-seryl-[protein] + ATP = O-phospho-L-seryl-[protein] + ADP + H(+). It carries out the reaction L-threonyl-[protein] + ATP = O-phospho-L-threonyl-[protein] + ADP + H(+). Activated by RHOA binding. Inhibited by Y-27632. Its function is as follows. Protein kinase which is a key regulator of actin cytoskeleton and cell polarity. Involved in regulation of smooth muscle contraction, actin cytoskeleton organization, stress fiber and focal adhesion formation, neurite retraction, cell adhesion and motility via phosphorylation of ADD1, BRCA2, CNN1, EZR, DPYSL2, EP300, MSN, MYL9/MLC2, NPM1, RDX, PPP1R12A and VIM. Phosphorylates SORL1 and IRF4. Acts as a negative regulator of VEGF-induced angiogenic endothelial cell activation. Positively regulates the activation of p42/MAPK1-p44/MAPK3 and of p90RSK/RPS6KA1 during myogenic differentiation. Plays an important role in the timely initiation of centrosome duplication. Inhibits keratinocyte terminal differentiation. May regulate closure of the eyelids and ventral body wall through organization of actomyosin bundles. Plays a critical role in the regulation of spine and synaptic properties in the hippocampus. Plays a role in placental homeostasis during the perinatal period. Plays an important role in generating the circadian rhythm of the aortic myofilament Ca(2+) sensitivity and vascular contractility by modulating the myosin light chain phosphorylation. The sequence is that of Rho-associated protein kinase 2 (Rock2) from Mus musculus (Mouse).